A 318-amino-acid chain; its full sequence is Probable serine/threonine-protein kinase MRK1 homolog (318 aa).

Residues 40–313 (YRYVEMIGRG…ASELLRKQFF (274 aa)) enclose the Protein kinase domain. ATP contacts are provided by residues 46–54 (IGRGSFGVV) and K68. D159 acts as the Proton acceptor in catalysis.

The protein belongs to the protein kinase superfamily. CMGC Ser/Thr protein kinase family. GSK-3 subfamily.

The protein resides in the cytoplasm. It is found in the nucleus. It catalyses the reaction L-seryl-[protein] + ATP = O-phospho-L-seryl-[protein] + ADP + H(+). The catalysed reaction is L-threonyl-[protein] + ATP = O-phospho-L-threonyl-[protein] + ADP + H(+). May play a role in the initiation and completion of mitosis. The chain is Probable serine/threonine-protein kinase MRK1 homolog (MRK1) from Encephalitozoon cuniculi (strain GB-M1) (Microsporidian parasite).